The primary structure comprises 143 residues: Transcription antitermination protein NusB (143 aa).

Belongs to the NusB family.

Involved in transcription antitermination. Required for transcription of ribosomal RNA (rRNA) genes. Binds specifically to the boxA antiterminator sequence of the ribosomal RNA (rrn) operons. This Dehalococcoides mccartyi (strain ATCC BAA-2266 / KCTC 15142 / 195) (Dehalococcoides ethenogenes (strain 195)) protein is Transcription antitermination protein NusB.